The primary structure comprises 465 residues: Methylenetetrahydrofolate--tRNA-(uracil-5-)-methyltransferase TrmFO (465 aa).

3 to 8 (GAGLAG) contributes to the FAD binding site.

This sequence belongs to the MnmG family. TrmFO subfamily. FAD serves as cofactor.

The protein resides in the cytoplasm. It carries out the reaction uridine(54) in tRNA + (6R)-5,10-methylene-5,6,7,8-tetrahydrofolate + NADH + H(+) = 5-methyluridine(54) in tRNA + (6S)-5,6,7,8-tetrahydrofolate + NAD(+). The catalysed reaction is uridine(54) in tRNA + (6R)-5,10-methylene-5,6,7,8-tetrahydrofolate + NADPH + H(+) = 5-methyluridine(54) in tRNA + (6S)-5,6,7,8-tetrahydrofolate + NADP(+). Functionally, catalyzes the folate-dependent formation of 5-methyl-uridine at position 54 (M-5-U54) in all tRNAs. The sequence is that of Methylenetetrahydrofolate--tRNA-(uracil-5-)-methyltransferase TrmFO from Bradyrhizobium sp. (strain ORS 278).